A 426-amino-acid chain; its full sequence is Gamma-glutamyl phosphate reductase (426 aa).

It belongs to the gamma-glutamyl phosphate reductase family.

It is found in the cytoplasm. It carries out the reaction L-glutamate 5-semialdehyde + phosphate + NADP(+) = L-glutamyl 5-phosphate + NADPH + H(+). The protein operates within amino-acid biosynthesis; L-proline biosynthesis; L-glutamate 5-semialdehyde from L-glutamate: step 2/2. In terms of biological role, catalyzes the NADPH-dependent reduction of L-glutamate 5-phosphate into L-glutamate 5-semialdehyde and phosphate. The product spontaneously undergoes cyclization to form 1-pyrroline-5-carboxylate. The sequence is that of Gamma-glutamyl phosphate reductase from Ralstonia nicotianae (strain ATCC BAA-1114 / GMI1000) (Ralstonia solanacearum).